Here is an 85-residue protein sequence, read N- to C-terminus: Small ribosomal subunit protein bS20 (85 aa).

It belongs to the bacterial ribosomal protein bS20 family.

Binds directly to 16S ribosomal RNA. The chain is Small ribosomal subunit protein bS20 from Borreliella afzelii (strain PKo) (Borrelia afzelii).